Here is a 97-residue protein sequence, read N- to C-terminus: Protein Vpr (97 aa).

The interval 1-42 (MEQAPEDQGPQREPHNEWTLELLEELKREAVRHFPRPWLHGL) is homooligomerization. 3 positions are modified to phosphoserine; by host: serine 79, serine 95, and serine 97.

Belongs to the HIV-1 VPR protein family. Homooligomer, may form homodimer. Interacts with p6-gag region of the Pr55 Gag precursor protein through a (Leu-X-X)4 motif near the C-terminus of the P6gag protein. Interacts with host UNG. May interact with host RAD23A/HHR23A. Interacts with host VPRBP/DCAF1, leading to hijack the CUL4A-RBX1-DDB1-DCAF1/VPRBP complex, mediating ubiquitination of host proteins such as TERT and ZGPAT and arrest of the cell cycle in G2 phase. Phosphorylated on several residues by host. These phosphorylations regulate VPR activity for the nuclear import of the HIV-1 pre-integration complex.

It is found in the virion. The protein localises to the host nucleus. Its subcellular location is the host extracellular space. During virus replication, may deplete host UNG protein, and incude G2-M cell cycle arrest. Acts by targeting specific host proteins for degradation by the 26S proteasome, through association with the cellular CUL4A-DDB1 E3 ligase complex by direct interaction with host VPRPB/DCAF-1. Cell cycle arrest reportedly occurs within hours of infection and is not blocked by antiviral agents, suggesting that it is initiated by the VPR carried into the virion. Additionally, VPR induces apoptosis in a cell cycle dependent manner suggesting that these two effects are mechanistically linked. Detected in the serum and cerebrospinal fluid of AIDS patient, VPR may also induce cell death to bystander cells. Functionally, during virus entry, plays a role in the transport of the viral pre-integration (PIC) complex to the host nucleus. This function is crucial for viral infection of non-dividing macrophages. May act directly at the nuclear pore complex, by binding nucleoporins phenylalanine-glycine (FG)-repeat regions. The protein is Protein Vpr of Human immunodeficiency virus type 1 group M subtype B (isolate YU-2) (HIV-1).